We begin with the raw amino-acid sequence, 143 residues long: Large ribosomal subunit protein uL11 (143 aa).

It belongs to the universal ribosomal protein uL11 family. In terms of assembly, part of the ribosomal stalk of the 50S ribosomal subunit. Interacts with L10 and the large rRNA to form the base of the stalk. L10 forms an elongated spine to which L12 dimers bind in a sequential fashion forming a multimeric L10(L12)X complex. One or more lysine residues are methylated.

In terms of biological role, forms part of the ribosomal stalk which helps the ribosome interact with GTP-bound translation factors. The polypeptide is Large ribosomal subunit protein uL11 (Alkalilimnicola ehrlichii (strain ATCC BAA-1101 / DSM 17681 / MLHE-1)).